The following is a 295-amino-acid chain: Apolipoprotein E (295 aa).

Residues 1 to 18 form the signal peptide; sequence MKVLWAALLVTFLAGCQA. 6 tandem repeats follow at residues 80 to 101, 102 to 123, 124 to 145, 146 to 167, 193 to 211, and 212 to 233. The tract at residues 80-233 is 6 X 22 AA approximate tandem repeats; that stretch reads TLMDETMKEL…RLDEVKEQVA (154 aa). A Methionine sulfoxide modification is found at Met-143. Position 147 is a phosphoserine (Ser-147). The interval 158 to 168 is LDL and other lipoprotein receptors binding; that stretch reads HLRKLRKRLLR. 162–165 contacts heparin; it reads LRKR. A lipid-binding and lipoprotein association region spans residues 191-268; sequence AATVGSLASQ…SWFEPLVEDM (78 aa). Residues 244–295 are homooligomerization; sequence QQISLQAEAFQARLKSWFEPLVEDMQRQWAGLVEKVQAAVGASTAPVPSDNH. The segment at 256-268 is specificity for association with VLDL; the sequence is RLKSWFEPLVEDM.

It belongs to the apolipoprotein A1/A4/E family. In terms of assembly, homotetramer. May interact with ABCA1; functionally associated with ABCA1 in the biogenesis of HDLs. May interact with APP/A4 amyloid-beta peptide; the interaction is extremely stable in vitro but its physiological significance is unclear. May interact with MAPT. May interact with MAP2. In the cerebrospinal fluid, interacts with secreted SORL1. Interacts with PMEL; this allows the loading of PMEL luminal fragment on ILVs to induce fibril nucleation. Post-translationally, APOE exists as multiple glycosylated and sialylated glycoforms within cells and in plasma. The extent of glycosylation and sialylation are tissue and context specific. Glycated in plasma VLDL. In terms of processing, phosphorylated by FAM20C in the extracellular medium.

It localises to the secreted. It is found in the extracellular space. The protein resides in the extracellular matrix. Its subcellular location is the extracellular vesicle. The protein localises to the endosome. It localises to the multivesicular body. Its function is as follows. APOE is an apolipoprotein, a protein associating with lipid particles, that mainly functions in lipoprotein-mediated lipid transport between organs via the plasma and interstitial fluids. APOE is a core component of plasma lipoproteins and is involved in their production, conversion and clearance. Apolipoproteins are amphipathic molecules that interact both with lipids of the lipoprotein particle core and the aqueous environment of the plasma. As such, APOE associates with chylomicrons, chylomicron remnants, very low density lipoproteins (VLDL) and intermediate density lipoproteins (IDL) but shows a preferential binding to high-density lipoproteins (HDL). It also binds a wide range of cellular receptors including the LDL receptor/LDLR, the LDL receptor-related proteins LRP1, LRP2 and LRP8 and the very low-density lipoprotein receptor/VLDLR that mediate the cellular uptake of the APOE-containing lipoprotein particles. Finally, APOE also has a heparin-binding activity and binds heparan-sulfate proteoglycans on the surface of cells, a property that supports the capture and the receptor-mediated uptake of APOE-containing lipoproteins by cells. A main function of APOE is to mediate lipoprotein clearance through the uptake of chylomicrons, VLDLs, and HDLs by hepatocytes. APOE is also involved in the biosynthesis by the liver of VLDLs as well as their uptake by peripheral tissues ensuring the delivery of triglycerides and energy storage in muscle, heart and adipose tissues. By participating in the lipoprotein-mediated distribution of lipids among tissues, APOE plays a critical role in plasma and tissues lipid homeostasis. APOE is also involved in two steps of reverse cholesterol transport, the HDLs-mediated transport of cholesterol from peripheral tissues to the liver, and thereby plays an important role in cholesterol homeostasis. First, it is functionally associated with ABCA1 in the biogenesis of HDLs in tissues. Second, it is enriched in circulating HDLs and mediates their uptake by hepatocytes. APOE also plays an important role in lipid transport in the central nervous system, regulating neuron survival and sprouting. The chain is Apolipoprotein E (APOE) from Macaca mulatta (Rhesus macaque).